A 337-amino-acid polypeptide reads, in one-letter code: MSEKIAVLGAGSWGSILASVLDENGHDVRLWSYNPKQVEELNTQHTNTHYIKDFTFSPSLVAYSDLASALTDVDAILFVVPTKAIRSVAGQVATILQDQHLQPQLIHASKGIEQQTYKRLSQVLEEEIPAENRQAVTVLSGPSHAEDVARKDITLVTAASASPEAAKYVQKLFMTSYFRVYTNPDIIGVEIGAALKNIIALGAGALHGLGYGDNAKAALMTRGLAEISRLGTSFGADPMTFIGLSGVGDIIVTATSSNSRNWRAGDELGRGEALDDVINHMGMVIEGLATTKAAYELSRERGVSMPITEAIYQVIYEGKDIRTAISDLMQREGRSEF.

The NADPH site is built by serine 12, tryptophan 13, and lysine 110. The sn-glycerol 3-phosphate site is built by lysine 110, glycine 141, and serine 143. Alanine 145 contributes to the NADPH binding site. Sn-glycerol 3-phosphate contacts are provided by lysine 196, aspartate 249, serine 259, arginine 260, and asparagine 261. Catalysis depends on lysine 196, which acts as the Proton acceptor. Arginine 260 is a binding site for NADPH. The NADPH site is built by valine 284 and glutamate 286.

Belongs to the NAD-dependent glycerol-3-phosphate dehydrogenase family.

The protein resides in the cytoplasm. It catalyses the reaction sn-glycerol 3-phosphate + NAD(+) = dihydroxyacetone phosphate + NADH + H(+). The enzyme catalyses sn-glycerol 3-phosphate + NADP(+) = dihydroxyacetone phosphate + NADPH + H(+). Its pathway is membrane lipid metabolism; glycerophospholipid metabolism. Functionally, catalyzes the reduction of the glycolytic intermediate dihydroxyacetone phosphate (DHAP) to sn-glycerol 3-phosphate (G3P), the key precursor for phospholipid synthesis. The protein is Glycerol-3-phosphate dehydrogenase [NAD(P)+] of Levilactobacillus brevis (strain ATCC 367 / BCRC 12310 / CIP 105137 / JCM 1170 / LMG 11437 / NCIMB 947 / NCTC 947) (Lactobacillus brevis).